A 642-amino-acid polypeptide reads, in one-letter code: Threonine--tRNA ligase (642 aa).

The TGS domain maps to 1 to 61 (MPVITLPDGS…DTDAQLAIIT (61 aa)). Residues 243 to 534 (DHRKIGKQLD…LTEEFAGFFP (292 aa)) form a catalytic region. Zn(2+) is bound by residues Cys-334, His-385, and His-511.

This sequence belongs to the class-II aminoacyl-tRNA synthetase family. In terms of assembly, homodimer. Requires Zn(2+) as cofactor.

The protein resides in the cytoplasm. The enzyme catalyses tRNA(Thr) + L-threonine + ATP = L-threonyl-tRNA(Thr) + AMP + diphosphate + H(+). Its function is as follows. Catalyzes the attachment of threonine to tRNA(Thr) in a two-step reaction: L-threonine is first activated by ATP to form Thr-AMP and then transferred to the acceptor end of tRNA(Thr). Also edits incorrectly charged L-seryl-tRNA(Thr). The polypeptide is Threonine--tRNA ligase (Pectobacterium atrosepticum (strain SCRI 1043 / ATCC BAA-672) (Erwinia carotovora subsp. atroseptica)).